The chain runs to 361 residues: ETS translocation variant 3-like protein (361 aa).

The ETS DNA-binding region spans 39-120; it reads IQLWHFILEL…KGKRFTYKFN (82 aa). The disordered stretch occupies residues 178-201; that stretch reads LTGQQTPRGPPETSGDKKGSSSSV.

Belongs to the ETS family.

It is found in the nucleus. Functionally, transcriptional regulator. This is ETS translocation variant 3-like protein (ETV3L) from Homo sapiens (Human).